The chain runs to 348 residues: Uroporphyrinogen decarboxylase (348 aa).

Substrate-binding positions include 27–31, F46, D76, Y152, S207, and H320; that span reads RQAGR.

This sequence belongs to the uroporphyrinogen decarboxylase family. In terms of assembly, homodimer.

It is found in the cytoplasm. It catalyses the reaction uroporphyrinogen III + 4 H(+) = coproporphyrinogen III + 4 CO2. Its pathway is porphyrin-containing compound metabolism; protoporphyrin-IX biosynthesis; coproporphyrinogen-III from 5-aminolevulinate: step 4/4. In terms of biological role, catalyzes the decarboxylation of four acetate groups of uroporphyrinogen-III to yield coproporphyrinogen-III. The protein is Uroporphyrinogen decarboxylase of Bacillus thuringiensis (strain Al Hakam).